Here is a 115-residue protein sequence, read N- to C-terminus: Glutaredoxin 4 (115 aa).

In terms of domain architecture, Glutaredoxin spans 5-107 (IEKIQRQIAE…QLIKETAAKY (103 aa)). Lysine 22 provides a ligand contact to glutathione. Cysteine 30 is a binding site for [2Fe-2S] cluster. Glutathione-binding positions include arginine 59, phenylalanine 71, and 84–85 (CD).

The protein belongs to the glutaredoxin family. Monothiol subfamily. Homodimer.

Its subcellular location is the cytoplasm. Its function is as follows. Monothiol glutaredoxin involved in the biogenesis of iron-sulfur clusters. The chain is Glutaredoxin 4 (grxD) from Shigella flexneri.